A 201-amino-acid chain; its full sequence is Protein CIMAP1C (201 aa).

One copy of the STPGR repeat lies at 171 to 186 (PAPTMSSRSGHTSPAR). Residues 172-201 (APTMSSRSGHTSPARLLSPWASSTRPTYAR) are disordered. Polar residues predominate over residues 191 to 201 (WASSTRPTYAR).

The protein belongs to the CIMAP family.

The polypeptide is Protein CIMAP1C (CIMAP1C) (Bos taurus (Bovine)).